A 474-amino-acid polypeptide reads, in one-letter code: uncharacterized protein (474 aa).

A helical transmembrane segment spans residues 374–398; the sequence is GLICYLALFSISLMIENIIGLTISL.

The protein localises to the membrane. This is an uncharacterized protein from Borreliella burgdorferi (strain ATCC 35210 / DSM 4680 / CIP 102532 / B31) (Borrelia burgdorferi).